Reading from the N-terminus, the 70-residue chain is UPF0150 protein TM_1311 (70 aa).

The protein belongs to the UPF0150 family.

This Thermotoga maritima (strain ATCC 43589 / DSM 3109 / JCM 10099 / NBRC 100826 / MSB8) protein is UPF0150 protein TM_1311.